The primary structure comprises 422 residues: Enolase 2 (422 aa).

Gln-162 is a (2R)-2-phosphoglycerate binding site. Catalysis depends on Glu-204, which acts as the Proton donor. Mg(2+) contacts are provided by Asp-241, Glu-285, and Asp-312. (2R)-2-phosphoglycerate is bound by residues Lys-337, Arg-366, Ser-367, and Lys-388. Lys-337 acts as the Proton acceptor in catalysis.

This sequence belongs to the enolase family. Mg(2+) serves as cofactor.

It is found in the cytoplasm. It localises to the secreted. Its subcellular location is the cell surface. It carries out the reaction (2R)-2-phosphoglycerate = phosphoenolpyruvate + H2O. It participates in carbohydrate degradation; glycolysis; pyruvate from D-glyceraldehyde 3-phosphate: step 4/5. Its function is as follows. Catalyzes the reversible conversion of 2-phosphoglycerate (2-PG) into phosphoenolpyruvate (PEP). It is essential for the degradation of carbohydrates via glycolysis. This is Enolase 2 from Lactococcus lactis subsp. lactis (strain IL1403) (Streptococcus lactis).